Consider the following 433-residue polypeptide: Probable glycine dehydrogenase (decarboxylating) subunit 1 (433 aa).

The protein belongs to the GcvP family. N-terminal subunit subfamily. In terms of assembly, the glycine cleavage system is composed of four proteins: P, T, L and H. In this organism, the P 'protein' is a heterodimer of two subunits.

The enzyme catalyses N(6)-[(R)-lipoyl]-L-lysyl-[glycine-cleavage complex H protein] + glycine + H(+) = N(6)-[(R)-S(8)-aminomethyldihydrolipoyl]-L-lysyl-[glycine-cleavage complex H protein] + CO2. The glycine cleavage system catalyzes the degradation of glycine. The P protein binds the alpha-amino group of glycine through its pyridoxal phosphate cofactor; CO(2) is released and the remaining methylamine moiety is then transferred to the lipoamide cofactor of the H protein. This is Probable glycine dehydrogenase (decarboxylating) subunit 1 from Thermoplasma acidophilum (strain ATCC 25905 / DSM 1728 / JCM 9062 / NBRC 15155 / AMRC-C165).